The primary structure comprises 190 residues: 2-phospho-L-lactate guanylyltransferase (190 aa).

This sequence belongs to the CofC family. As to quaternary structure, homodimer.

It carries out the reaction (2S)-2-phospholactate + GTP + H(+) = (2S)-lactyl-2-diphospho-5'-guanosine + diphosphate. Its pathway is cofactor biosynthesis; coenzyme F420 biosynthesis. Its function is as follows. Guanylyltransferase that catalyzes the activation of (2S)-2-phospholactate (2-PL) as (2S)-lactyl-2-diphospho-5'-guanosine, via the condensation of 2-PL with GTP. It is involved in the biosynthesis of coenzyme F420, a hydride carrier cofactor. This Methanopyrus kandleri (strain AV19 / DSM 6324 / JCM 9639 / NBRC 100938) protein is 2-phospho-L-lactate guanylyltransferase.